Consider the following 100-residue polypeptide: Small ribosomal subunit protein uS14c (100 aa).

This sequence belongs to the universal ribosomal protein uS14 family. As to quaternary structure, part of the 30S ribosomal subunit.

Its subcellular location is the plastid. It localises to the chloroplast. Binds 16S rRNA, required for the assembly of 30S particles. The protein is Small ribosomal subunit protein uS14c of Trieres chinensis (Marine centric diatom).